Reading from the N-terminus, the 359-residue chain is 3-dehydroquinate synthase (359 aa).

Residues 70–75, 104–108, 128–129, Lys141, and Lys150 contribute to the NAD(+) site; these read DAEGGK, GAATD, and TT. Zn(2+) is bound by residues Glu183, His246, and His262.

The protein belongs to the sugar phosphate cyclases superfamily. Dehydroquinate synthase family. Requires Co(2+) as cofactor. It depends on Zn(2+) as a cofactor. The cofactor is NAD(+).

The protein resides in the cytoplasm. The enzyme catalyses 7-phospho-2-dehydro-3-deoxy-D-arabino-heptonate = 3-dehydroquinate + phosphate. The protein operates within metabolic intermediate biosynthesis; chorismate biosynthesis; chorismate from D-erythrose 4-phosphate and phosphoenolpyruvate: step 2/7. In terms of biological role, catalyzes the conversion of 3-deoxy-D-arabino-heptulosonate 7-phosphate (DAHP) to dehydroquinate (DHQ). In Mycolicibacterium vanbaalenii (strain DSM 7251 / JCM 13017 / BCRC 16820 / KCTC 9966 / NRRL B-24157 / PYR-1) (Mycobacterium vanbaalenii), this protein is 3-dehydroquinate synthase.